The sequence spans 223 residues: Serine/threonine/tyrosine-interacting protein B (223 aa).

Residues 28–176 (EMQEILPGLF…LQEYEAIYLA (149 aa)) form the Tyrosine-protein phosphatase domain.

Belongs to the protein-tyrosine phosphatase family. Non-receptor class subfamily.

In terms of biological role, catalytically inactive phosphatase. The polypeptide is Serine/threonine/tyrosine-interacting protein B (styx-b) (Xenopus laevis (African clawed frog)).